A 255-amino-acid chain; its full sequence is tRNA (guanine-N(1)-)-methyltransferase (255 aa).

S-adenosyl-L-methionine is bound by residues Gly-112 and 131–136 (LGDYVL).

It belongs to the RNA methyltransferase TrmD family. As to quaternary structure, homodimer.

Its subcellular location is the cytoplasm. It carries out the reaction guanosine(37) in tRNA + S-adenosyl-L-methionine = N(1)-methylguanosine(37) in tRNA + S-adenosyl-L-homocysteine + H(+). Functionally, specifically methylates guanosine-37 in various tRNAs. The protein is tRNA (guanine-N(1)-)-methyltransferase of Lacticaseibacillus paracasei (strain ATCC 334 / BCRC 17002 / CCUG 31169 / CIP 107868 / KCTC 3260 / NRRL B-441) (Lactobacillus paracasei).